The sequence spans 147 residues: ATP synthase subunit 9, mitochondrial (147 aa).

A mitochondrion-targeting transit peptide spans 1–66 (MASTRVLASR…TTRQAFQKRA (66 aa)). The next 2 membrane-spanning stretches (helical) occupy residues 86–106 (SAAI…AALL) and 123–143 (AILG…VALM).

Belongs to the ATPase C chain family. F-type ATPases have 2 components, CF(1) - the catalytic core - and CF(0) - the membrane proton channel. CF(1) has five subunits: alpha(3), beta(3), gamma(1), delta(1), epsilon(1). CF(0) has three main subunits: a, b and c.

It localises to the mitochondrion membrane. Mitochondrial membrane ATP synthase (F(1)F(0) ATP synthase or Complex V) produces ATP from ADP in the presence of a proton gradient across the membrane which is generated by electron transport complexes of the respiratory chain. F-type ATPases consist of two structural domains, F(1) - containing the extramembraneous catalytic core and F(0) - containing the membrane proton channel, linked together by a central stalk and a peripheral stalk. During catalysis, ATP synthesis in the catalytic domain of F(1) is coupled via a rotary mechanism of the central stalk subunits to proton translocation. Part of the complex F(0) domain. A homomeric c-ring of probably 10 subunits is part of the complex rotary element. The protein is ATP synthase subunit 9, mitochondrial (oli) of Neurospora crassa (strain ATCC 24698 / 74-OR23-1A / CBS 708.71 / DSM 1257 / FGSC 987).